The chain runs to 286 residues: Bifunctional protein FolD (286 aa).

NADP(+)-binding positions include 166 to 168 (GQS), Ser191, and Ile232.

The protein belongs to the tetrahydrofolate dehydrogenase/cyclohydrolase family. In terms of assembly, homodimer.

The enzyme catalyses (6R)-5,10-methylene-5,6,7,8-tetrahydrofolate + NADP(+) = (6R)-5,10-methenyltetrahydrofolate + NADPH. The catalysed reaction is (6R)-5,10-methenyltetrahydrofolate + H2O = (6R)-10-formyltetrahydrofolate + H(+). The protein operates within one-carbon metabolism; tetrahydrofolate interconversion. In terms of biological role, catalyzes the oxidation of 5,10-methylenetetrahydrofolate to 5,10-methenyltetrahydrofolate and then the hydrolysis of 5,10-methenyltetrahydrofolate to 10-formyltetrahydrofolate. This chain is Bifunctional protein FolD, found in Alkalilimnicola ehrlichii (strain ATCC BAA-1101 / DSM 17681 / MLHE-1).